The sequence spans 529 residues: uncharacterized protein (529 aa).

ATP-binding positions include 178–186 (TSGTTGQPK), Asp401, Arg416, and Lys510.

Belongs to the ATP-dependent AMP-binding enzyme family.

This is an uncharacterized protein from Bacillus subtilis (strain 168).